The primary structure comprises 199 residues: Probable GTP-binding protein EngB (199 aa).

An EngB-type G domain is found at 28–199 (DLPEIALAGR…DSWDAILEQV (172 aa)). GTP contacts are provided by residues 36-43 (GRSNVGKS), 63-67 (GKTQL), 81-84 (DVPG), 148-151 (TKAD), and 180-182 (FSS). Mg(2+)-binding residues include Ser-43 and Thr-65.

This sequence belongs to the TRAFAC class TrmE-Era-EngA-EngB-Septin-like GTPase superfamily. EngB GTPase family. Requires Mg(2+) as cofactor.

Functionally, necessary for normal cell division and for the maintenance of normal septation. The protein is Probable GTP-binding protein EngB of Streptococcus pyogenes serotype M6 (strain ATCC BAA-946 / MGAS10394).